The sequence spans 421 residues: Zinc chaperone AztD (421 aa).

Positions 1-29 (MMENIMKKRLLSTSISTLLLGLSVMPAFA) are cleaved as a signal peptide. Zn(2+) contacts are provided by H101, H104, D106, H126, H169, H216, and H405. C212 and C229 form a disulfide bridge. The segment at 399–421 (GGSGKVHGEHHDHEAHHHDDHAH) is disordered. Residues 404-421 (VHGEHHDHEAHHHDDHAH) show a composition bias toward basic and acidic residues. An N-terminal Zn(2+)-binding motif; binds a third Zn(2+) with low affinity motif is present at residues 408–419 (HHDHEAHHHDDH).

Monomer.

The protein resides in the periplasm. Acts as a zinc chaperone in the AztABCD zinc transport system. Directly transfers one zinc cation to the solute binding protein AztC; the transfer occurs without the formation of a stable interaction. Binds 3 Zn(2+), two with high affinity and one with low affinity, and transfers only Zn(2+) bound to site 2 to AztC. This chain is Zinc chaperone AztD, found in Citrobacter koseri (strain ATCC BAA-895 / CDC 4225-83 / SGSC4696).